We begin with the raw amino-acid sequence, 61 residues long: Photosystem II reaction center protein K (61 aa).

The propeptide occupies 1 to 24 (MLNIFSLICICINSALHSSSFFFA). A helical transmembrane segment spans residues 40-60 (MPVIPVLFFLLALVWQAAVSF).

This sequence belongs to the PsbK family. As to quaternary structure, PSII is composed of 1 copy each of membrane proteins PsbA, PsbB, PsbC, PsbD, PsbE, PsbF, PsbH, PsbI, PsbJ, PsbK, PsbL, PsbM, PsbT, PsbX, PsbY, PsbZ, Psb30/Ycf12, at least 3 peripheral proteins of the oxygen-evolving complex and a large number of cofactors. It forms dimeric complexes.

The protein localises to the plastid. The protein resides in the chloroplast thylakoid membrane. Its function is as follows. One of the components of the core complex of photosystem II (PSII). PSII is a light-driven water:plastoquinone oxidoreductase that uses light energy to abstract electrons from H(2)O, generating O(2) and a proton gradient subsequently used for ATP formation. It consists of a core antenna complex that captures photons, and an electron transfer chain that converts photonic excitation into a charge separation. The chain is Photosystem II reaction center protein K from Liriodendron tulipifera (Tuliptree).